A 237-amino-acid polypeptide reads, in one-letter code: 1-(5-phosphoribosyl)-5-[(5-phosphoribosylamino)methylideneamino] imidazole-4-carboxamide isomerase (237 aa).

D8 functions as the Proton acceptor in the catalytic mechanism. The active-site Proton donor is D127.

This sequence belongs to the HisA/HisF family.

It localises to the cytoplasm. It carries out the reaction 1-(5-phospho-beta-D-ribosyl)-5-[(5-phospho-beta-D-ribosylamino)methylideneamino]imidazole-4-carboxamide = 5-[(5-phospho-1-deoxy-D-ribulos-1-ylimino)methylamino]-1-(5-phospho-beta-D-ribosyl)imidazole-4-carboxamide. It functions in the pathway amino-acid biosynthesis; L-histidine biosynthesis; L-histidine from 5-phospho-alpha-D-ribose 1-diphosphate: step 4/9. This chain is 1-(5-phosphoribosyl)-5-[(5-phosphoribosylamino)methylideneamino] imidazole-4-carboxamide isomerase, found in Sulfurovum sp. (strain NBC37-1).